The following is a 390-amino-acid chain: Altered inheritance of mitochondria protein 6 (390 aa).

The signal sequence occupies residues 1–26; it reads MLGLKGCLTILIGYVIAVCALFSSRG.

Belongs to the AIM6 family.

This chain is Altered inheritance of mitochondria protein 6 (AIM6), found in Saccharomyces cerevisiae (strain YJM789) (Baker's yeast).